The following is a 254-amino-acid chain: ATP synthase subunit a (254 aa).

The propeptide at 1–6 is removed in mature form; it reads MAFLIH. Helical transmembrane passes span 32 to 52, 83 to 103, 119 to 139, 146 to 166, 182 to 202, 207 to 227, and 228 to 248; these read LTNL…LHIM, IGAA…FILI, SIMV…ILGL, FFSF…LVPI, LFAN…FLAP, TFII…IIGL, and EIAV…SYLK.

Belongs to the ATPase A chain family. F-type ATPases have 2 components, CF(1) - the catalytic core - and CF(0) - the membrane proton channel. CF(1) has five subunits: alpha(3), beta(3), gamma(1), delta(1), epsilon(1). CF(0) has three main subunits: a, b and c.

The protein resides in the mitochondrion inner membrane. Its function is as follows. Mitochondrial membrane ATP synthase (F(1)F(0) ATP synthase or Complex V) produces ATP from ADP in the presence of a proton gradient across the membrane which is generated by electron transport complexes of the respiratory chain. F-type ATPases consist of two structural domains, F(1) - containing the extramembraneous catalytic core and F(0) - containing the membrane proton channel, linked together by a central stalk and a peripheral stalk. During catalysis, ATP synthesis in the catalytic domain of F(1) is coupled via a rotary mechanism of the central stalk subunits to proton translocation. Key component of the proton channel; it may play a direct role in the translocation of protons across the membrane. In Mycosarcoma maydis (Corn smut fungus), this protein is ATP synthase subunit a (ATP6).